The chain runs to 209 residues: MLDFYYLPGSAPCRAVQMVAEAVHVKLNLKYLDLMAGAHRSPQFTKLNPQRTIPTLVDGSLILSESRAALIYLCDQYGDEDNDWYPRDTIQRAIVNQRLFFDACVLYPRFADFYHPQVFGNAAPDGRKRLAFEKAVELLNIFLSEHEFVAGSKMTIADISLFATLATACTLGFILRPYVHVDRWYVTMVASCPGAQANVSGAKEFLTYK.

Positions 1–81 (MLDFYYLPGS…YLCDQYGDED (81 aa)) constitute a GST N-terminal domain. Residues Ser10, 51–53 (RTI), and 65–67 (ESR) contribute to the glutathione site. In terms of domain architecture, GST C-terminal spans 88–209 (DTIQRAIVNQ…SGAKEFLTYK (122 aa)).

This sequence belongs to the GST superfamily. Theta family. In terms of assembly, homodimer.

It catalyses the reaction RX + glutathione = an S-substituted glutathione + a halide anion + H(+). Conjugation of reduced glutathione to a wide number of exogenous and endogenous hydrophobic electrophiles. The polypeptide is Glutathione S-transferase 2 (GstD2) (Anopheles gambiae (African malaria mosquito)).